Reading from the N-terminus, the 123-residue chain is Small ribosomal subunit protein uS17 (123 aa).

Belongs to the universal ribosomal protein uS17 family. Part of the 30S ribosomal subunit.

One of the primary rRNA binding proteins, it binds specifically to the 5'-end of 16S ribosomal RNA. The polypeptide is Small ribosomal subunit protein uS17 (Pyrobaculum aerophilum (strain ATCC 51768 / DSM 7523 / JCM 9630 / CIP 104966 / NBRC 100827 / IM2)).